A 179-amino-acid chain; its full sequence is uncharacterized protein (179 aa).

The first 27 residues, 1-27 (MNKSMIQSGGYVLLAGLILAMSSTLFA), serve as a signal peptide directing secretion. The cysteines at positions 43 and 83 are disulfide-linked.

The protein belongs to the fimbrial protein family.

It is found in the fimbrium. Its function is as follows. Part of the yfcOPQRSUV fimbrial operon. Could contribute to adhesion to various surfaces in specific environmental niches. Increases adhesion to eukaryotic T24 bladder epithelial cells in the absence of fim genes. This is an uncharacterized protein from Escherichia coli (strain K12).